The chain runs to 1295 residues: Protein glp-1 (1295 aa).

The signal sequence occupies residues 1–15; it reads MRVLLILLAFFAPIA. Residues 16 to 764 are Extracellular-facing; it reads SQLMGGECGR…NEIDEGWSRS (749 aa). 4 consecutive EGF-like domains span residues 19-58, 117-152, 154-190, and 190-230; these read MGGE…AFCE, GVNP…SYCE, GIDH…RYCE, and ERTE…EFCN. Intrachain disulfides connect Cys23–Cys35, Cys29–Cys46, Cys48–Cys57, Cys121–Cys131, Cys126–Cys140, Cys142–Cys151, Cys158–Cys169, Cys163–Cys178, Cys180–Cys189, Cys201–Cys206, Cys220–Cys229, Cys236–Cys248, Cys242–Cys257, Cys259–Cys268, Cys275–Cys286, Cys280–Cys296, Cys298–Cys307, Cys329–Cys342, Cys336–Cys347, Cys349–Cys358, Cys373–Cys384, Cys378–Cys394, Cys396–Cys405, Cys411–Cys422, Cys416–Cys431, Cys433–Cys442, Cys450–Cys461, Cys455–Cys467, Cys469–Cys478, Cys496–Cys519, Cys501–Cys514, Cys510–Cys526, Cys536–Cys560, Cys542–Cys555, Cys551–Cys567, Cys582–Cys595, and Cys591–Cys607. Residues 232–269 form the EGF-like 5; calcium-binding domain; it reads DKNECLIEETCVNNSTCFNLHGDFTCTCKPGYAGKYCE. N-linked (GlcNAc...) asparagine glycosylation is found at Asn244 and Asn245. EGF-like domains lie at 271-308, 316-359, 369-406, 407-443, and 446-479; these read AIDM…QRCE, GGIH…DRCE, DIQS…LNCE, QHLL…DYCE, and DRQL…PTCE. Asn333 carries an N-linked (GlcNAc...) asparagine glycan. An N-linked (GlcNAc...) asparagine glycan is attached at Asn381. LNR repeat units lie at residues 496–532, 536–577, and 581–612; these read CEQR…GQRP, CQYP…CPAH, and HCIE…NGTE. N-linked (GlcNAc...) asparagine glycans are attached at residues Asn609 and Asn675. The chain crosses the membrane as a helical span at residues 765 to 786; that stretch reads QVILFACIAFLAFGTVVAGVIA. Residues 787–1295 lie on the Cytoplasmic side of the membrane; it reads KNGPERSRKR…AEQMNGSFYC (509 aa). 5 ANK repeats span residues 961–990, 994–1023, 1030–1062, 1074–1103, and 1107–1136; these read DENT…NPTI, SERS…LLKE, NGMT…KLDY, KGRT…NKDK, and DGRT…SLGI. The disordered stretch occupies residues 1177-1244; sequence IVKSGHGAKS…TTSTPNRMET (68 aa). The span at 1201–1210 shows a compositional bias: polar residues; that stretch reads KTPTSAASSR. Over residues 1221 to 1239 the composition is skewed to low complexity; sequence DGSFSSPSPHYYPTTTSTP.

As to quaternary structure, interacts with sel-10. In terms of assembly, when activated, the glp-1/Notch intracellular domain (NICD) may become a component of a complex consisting of at least the NICD, lag-1 and lag-3. In terms of processing, upon binding its ligands, it is cleaved (S2 cleavage) in its extracellular domain, close to the transmembrane domain. S2 cleavage is probably mediated by the metalloproteases adm-4 and sup-17. It is then cleaved (S3 cleavage) downstream of its transmembrane domain, releasing it from the cell membrane; S3 cleavage requires a multiprotein gamma-secretase complex, which may include presenilin sel-12. Expressed in the distal mitotic region of the germ line. May be absent from the gonadal distal tip cell (DTC).

The protein localises to the cell membrane. It localises to the cell projection. The protein resides in the axon. It is found in the nucleus. In terms of biological role, essential signaling protein which has a major role in germline and embryonic development; involved in cell fate decisions that require cell-cell interactions. Probable membrane-bound receptor for putative ligands lag-2 and apx-1. Upon ligand activation, and releasing from the cell membrane, the glp-1/Notch intracellular domain (NICD) probably forms a transcriptional activator complex with lag-1 and lag-3 and regulates expression of various genes; targets in the germline include lst-1 and sygl-1. Involved in the specification of the cell fates of the blastomeres, ABa and ABp. Proper signaling by glp-1 induces ABa descendants to produce anterior pharyngeal cells, and ABp descendants to adopt a different fate. Contributes to the establishment of the dorsal-ventral axis in early embryos. Required in postmitotic neurons in order to maintain the developmentally arrested larval state known as dauer, probably in response to lag-2. Regulates germ cell mitotic proliferation probably by regulating MAP kinase phosphatase lip-1 expression. Required for oocyte growth control. Plays a negative role in lifespan. The sequence is that of Protein glp-1 from Caenorhabditis elegans.